A 293-amino-acid polypeptide reads, in one-letter code: Formamidopyrimidine-DNA glycosylase (293 aa).

Catalysis depends on P2, which acts as the Schiff-base intermediate with DNA. E3 acts as the Proton donor in catalysis. K58 (proton donor; for beta-elimination activity) is an active-site residue. Residues H104, R123, and K166 each coordinate DNA. The segment at 257–293 (AVYDREGERCRTPGCNGTVKRLVQNGRSTFWCSGCQT) adopts an FPG-type zinc-finger fold. R283 acts as the Proton donor; for delta-elimination activity in catalysis.

Belongs to the FPG family. As to quaternary structure, monomer. The cofactor is Zn(2+).

The catalysed reaction is Hydrolysis of DNA containing ring-opened 7-methylguanine residues, releasing 2,6-diamino-4-hydroxy-5-(N-methyl)formamidopyrimidine.. The enzyme catalyses 2'-deoxyribonucleotide-(2'-deoxyribose 5'-phosphate)-2'-deoxyribonucleotide-DNA = a 3'-end 2'-deoxyribonucleotide-(2,3-dehydro-2,3-deoxyribose 5'-phosphate)-DNA + a 5'-end 5'-phospho-2'-deoxyribonucleoside-DNA + H(+). Functionally, involved in base excision repair of DNA damaged by oxidation or by mutagenic agents. Acts as a DNA glycosylase that recognizes and removes damaged bases. Has a preference for oxidized purines, such as 7,8-dihydro-8-oxoguanine (8-oxoG). Has AP (apurinic/apyrimidinic) lyase activity and introduces nicks in the DNA strand. Cleaves the DNA backbone by beta-delta elimination to generate a single-strand break at the site of the removed base with both 3'- and 5'-phosphates. The protein is Formamidopyrimidine-DNA glycosylase of Rhodopseudomonas palustris (strain HaA2).